The following is a 106-amino-acid chain: ATP-dependent Clp protease adapter protein ClpS (106 aa).

It belongs to the ClpS family. In terms of assembly, binds to the N-terminal domain of the chaperone ClpA.

Functionally, involved in the modulation of the specificity of the ClpAP-mediated ATP-dependent protein degradation. The sequence is that of ATP-dependent Clp protease adapter protein ClpS from Nocardia farcinica (strain IFM 10152).